Here is a 183-residue protein sequence, read N- to C-terminus: Mast cell-expressed membrane protein 1 (183 aa).

The interval 1–26 is disordered; that stretch reads MHASASQDKNRRKPGHDEGAHNPDYE. At 1–70 the chain is on the cytoplasmic side; it reads MHASASQDKN…PPWLYRTIMM (70 aa). Basic and acidic residues predominate over residues 15-24; the sequence is GHDEGAHNPD. Residues 71–91 form a helical; Signal-anchor for type II membrane protein membrane-spanning segment; the sequence is LYVLLALVFLSCIVLSALVLV. Over 92 to 183 the chain is Extracellular; it reads KNSEMSKELW…EKKAQPQPST (92 aa). N-linked (GlcNAc...) asparagine glycosylation occurs at asparagine 109.

The protein resides in the membrane. This chain is Mast cell-expressed membrane protein 1, found in Mus musculus (Mouse).